The primary structure comprises 258 residues: U6 snRNA phosphodiesterase 1 (258 aa).

The interval 1–20 (MALVDYGGSSSSASEDEDCT) is disordered. The Proton acceptor role is filled by H117. AMP contacts are provided by residues 117–119 (HLS), Y200, and 202–208 (PASFHVS). Residues Y200 and 204–208 (SFHVS) contribute to the UMP site. The Proton donor role is filled by H206.

Belongs to the 2H phosphoesterase superfamily. USB1 family.

Its subcellular location is the nucleus. The catalysed reaction is a 3'-end uridylyl-uridine-RNA = a 3'-end 2',3'-cyclophospho-uridine-RNA + uridine. Its function is as follows. 3'-5' RNA exonuclease that trims the 3' end of oligo(U) tracts of the pre-U6 small nuclear RNA (snRNA) molecule, leading to the formation of a mature U6 snRNA 3' end-terminated with a 2',3'-cyclic phosphate. Participates in the U6 snRNA 3' end processing that prevents U6 snRNA degradation. The polypeptide is U6 snRNA phosphodiesterase 1 (Drosophila melanogaster (Fruit fly)).